We begin with the raw amino-acid sequence, 375 residues long: Chanoclavine-I aldehyde reductase ifgG (375 aa).

FMN is bound by residues 31–33 (PTT), alanine 66, glutamine 108, and histidine 176. Residues histidine 176 and asparagine 179 each coordinate substrate. Tyrosine 181 acts as the Proton donor in catalysis. FMN contacts are provided by residues lysine 228, glycine 300, 325 to 326 (GR), and arginine 326. Residue tyrosine 353 participates in substrate binding.

Belongs to the NADH:flavin oxidoreductase/NADH oxidase family. FMN serves as cofactor.

It carries out the reaction dihydrochanoclavine-I aldehyde + NADP(+) = chanoclavine-I aldehyde + NADPH + H(+). The protein operates within alkaloid biosynthesis; ergot alkaloid biosynthesis. Its function is as follows. Chanoclavine-I aldehyde reductase; part of the gene cluster that mediates the biosynthesis of isofumigaclavines, fungal ergot alkaloids. The tryptophan dimethylallyltransferase ifgA catalyzes the first step of ergot alkaloid biosynthesis by condensing dimethylallyl diphosphate (DMAP) and tryptophan to form 4-dimethylallyl-L-tryptophan. The second step is catalyzed by the methyltransferase ifgB that methylates 4-dimethylallyl-L-tryptophan in the presence of S-adenosyl-L-methionine, resulting in the formation of N-methyl-dimethylallyl-L-tryptophan. The catalase ifgD and the FAD-dependent oxidoreductase ifgC then transform N-methyl-dimethylallyl-L-tryptophan to chanoclavine-I which is further oxidized by ifgE in the presence of NAD(+), resulting in the formation of chanoclavine-I aldehyde. The chanoclavine-I aldehyde reductases ifgG and/or fgaOx3 reduce chanoclavine-I aldehyde to dihydrochanoclavine-I aldehyde that spontaneously dehydrates to form 6,8-dimethyl-6,7-didehydroergoline. The festuclavine dehydrogenases ifgF1 and/or ifgF2 then catalyze the reduction of 6,8-dimethyl-6,7-didehydroergoline to form festuclavine. Hydrolysis of festuclavine by a yet undetermined cytochrome P450 monooxygenase (called ifgH) then leads to the formation of isofumigaclavine B which is in turn acetylated by ifgI to isofumigaclavine A. Penicillium roqueforti has interestingly at least two sets of genes for the consumption of chanoclavine-I aldehyde on three different loci, the OYEs ifgG/fgaOx3 and the festuclavine synthase homologs ifgF1/ifgF2. The reason for the duplication of these genes is unclear, probably to ensure the conversion of chanoclavine-I aldehyde by differential gene expression under various environmental conditions. The sequence is that of Chanoclavine-I aldehyde reductase ifgG from Penicillium roqueforti (strain FM164).